The chain runs to 297 residues: HTH-type transcriptional regulator ArgP (297 aa).

In terms of domain architecture, HTH lysR-type spans 4 to 60; the sequence is PDYRTLQALDAVIRERGFERAAQKLCITQSAVSQRIKQLENMFGQPLLVRTVPPRPT. The segment at residues 21–40 is a DNA-binding region (H-T-H motif); the sequence is FERAAQKLCITQSAVSQRIK.

The protein belongs to the LysR transcriptional regulatory family. In terms of assembly, homodimer.

Functionally, controls the transcription of genes involved in arginine and lysine metabolism. This Salmonella arizonae (strain ATCC BAA-731 / CDC346-86 / RSK2980) protein is HTH-type transcriptional regulator ArgP.